The primary structure comprises 203 residues: dITP/XTP pyrophosphatase (203 aa).

7 to 12 is a binding site for substrate; it reads TGNRDK. Asp73 (proton acceptor) is an active-site residue. Asp73 provides a ligand contact to Mg(2+). Residues Ser74, 155-158, Lys178, and 183-184 contribute to the substrate site; these read FGYD and HR.

The protein belongs to the HAM1 NTPase family. Homodimer. Mg(2+) serves as cofactor.

It catalyses the reaction XTP + H2O = XMP + diphosphate + H(+). It carries out the reaction dITP + H2O = dIMP + diphosphate + H(+). The catalysed reaction is ITP + H2O = IMP + diphosphate + H(+). Functionally, pyrophosphatase that catalyzes the hydrolysis of nucleoside triphosphates to their monophosphate derivatives, with a high preference for the non-canonical purine nucleotides XTP (xanthosine triphosphate), dITP (deoxyinosine triphosphate) and ITP. Seems to function as a house-cleaning enzyme that removes non-canonical purine nucleotides from the nucleotide pool, thus preventing their incorporation into DNA/RNA and avoiding chromosomal lesions. This is dITP/XTP pyrophosphatase from Wolinella succinogenes (strain ATCC 29543 / DSM 1740 / CCUG 13145 / JCM 31913 / LMG 7466 / NCTC 11488 / FDC 602W) (Vibrio succinogenes).